We begin with the raw amino-acid sequence, 417 residues long: Tumor necrosis factor receptor superfamily member 25 (417 aa).

Residues 1 to 24 form the signal peptide; the sequence is MEQRPRGCAAVAAALLLVLLGARA. Residues 25-199 lie on the Extracellular side of the membrane; that stretch reads QGGTRSPRCD…RCAAVCGWRQ (175 aa). TNFR-Cys repeat units follow at residues 34–71, 72–115, 116–163, and 164–192; these read DCAG…STCL, VCPQ…DTRC, GCKP…TDCG, and TCLP…ERCA. 12 disulfides stabilise this stretch: cysteine 35-cysteine 47, cysteine 48-cysteine 61, cysteine 51-cysteine 70, cysteine 73-cysteine 89, cysteine 92-cysteine 107, cysteine 95-cysteine 115, cysteine 117-cysteine 130, cysteine 138-cysteine 155, cysteine 141-cysteine 162, cysteine 165-cysteine 176, cysteine 179-cysteine 191, and cysteine 187-cysteine 195. N-linked (GlcNAc...) asparagine glycosylation occurs at asparagine 67. Residue asparagine 106 is glycosylated (N-linked (GlcNAc...) asparagine). A helical transmembrane segment spans residues 200–220; it reads MFWVQVLLAGLVVPLLLGATL. Residues 221–417 lie on the Cytoplasmic side of the membrane; sequence TYTYRHCWPH…DLRSRLQRGP (197 aa). One can recognise a Death domain in the interval 332–413; it reads GPQLYDVMDA…GCVEDLRSRL (82 aa). (Microbial infection) N-beta-linked (GlcNAc) arginine glycosylation occurs at arginine 352.

As to quaternary structure, homodimer. Interacts strongly via the death domains with TNFRSF1 and TRADD to activate at least two distinct signaling cascades, apoptosis and NF-kappa-B signaling. Interacts with BAG4. (Microbial infection) Glycosylated at Arg-352 by enteropathogenic E.coli protein NleB1. In terms of processing, glycosylated. As to expression, abundantly expressed in thymocytes and lymphocytes. Detected in lymphocyte-rich tissues such as thymus, colon, intestine, and spleen. Also found in the prostate.

The protein localises to the cell membrane. It localises to the secreted. Its function is as follows. Receptor for TNFSF12/APO3L/TWEAK. Interacts directly with the adapter TRADD. Mediates activation of NF-kappa-B and induces apoptosis. May play a role in regulating lymphocyte homeostasis. The sequence is that of Tumor necrosis factor receptor superfamily member 25 (TNFRSF25) from Homo sapiens (Human).